Consider the following 194-residue polypeptide: MAPLPLCFVTSSKKKLAEFLHAVGDNTIAHVSMDLPELQGDPETVAREKARAASRIYGGPVLVEDVSLCFNAYKGLPGVYVKSFLTAVGPSGLCNMLLPYEDKSAYALCIYAFCDVTVDDKPALFTGRADGRIVPPRGPQTFGWDCIFEPLEGGGKTYAEMEMVEKSAISHRGKALEKVKAFLTNSGVKVPCVK.

Thr-10 to Lys-15 lines the ITP pocket. Residue Glu-37 participates in Mg(2+) binding. ITP contacts are provided by residues Lys-49, Asp-65–Val-66, Lys-82, Phe-142–Asp-145, Lys-166, and His-171–Arg-172.

It belongs to the HAM1 NTPase family. As to quaternary structure, homodimer. It depends on Mg(2+) as a cofactor. Requires Mn(2+) as cofactor.

The protein localises to the cytoplasm. It carries out the reaction ITP + H2O = IMP + diphosphate + H(+). The catalysed reaction is dITP + H2O = dIMP + diphosphate + H(+). It catalyses the reaction XTP + H2O = XMP + diphosphate + H(+). Its function is as follows. Pyrophosphatase that hydrolyzes non-canonical purine nucleotides such as inosine triphosphate (ITP), deoxyinosine triphosphate (dITP) or xanthosine 5'-triphosphate (XTP) to their respective monophosphate derivatives. The enzyme does not distinguish between the deoxy- and ribose forms. Probably excludes non-canonical purines from RNA and DNA precursor pools, thus preventing their incorporation into RNA and DNA and avoiding chromosomal lesions. In Giardia intestinalis (strain ATCC 50803 / WB clone C6) (Giardia lamblia), this protein is Inosine triphosphate pyrophosphatase.